The following is a 121-amino-acid chain: Putative RNase MJ1216 (121 aa).

Residues arginine 76 and histidine 81 contribute to the active site. The short motif at 76–83 (RDKLIHQY) is the RX(4)HXY motif element. Position 83 is an O-di-AMP-tyrosine (tyrosine 83).

It belongs to the HepT RNase toxin family. Homodimer, probably forms a complex with antitoxin MJ1215 or MJ1217. In terms of processing, modified by antitoxin MJ1215 or MJ1217; probably at least 2 successive AMPylation events occur on Tyr-83.

In terms of biological role, probable toxic component of a putative type VII toxin-antitoxin (TA) system, probably an RNase. Probably neutralized by antitoxin MJ1215 or MJ1217. Neutralization may be due to AMPylation by antitoxin. This is Putative RNase MJ1216 from Methanocaldococcus jannaschii (strain ATCC 43067 / DSM 2661 / JAL-1 / JCM 10045 / NBRC 100440) (Methanococcus jannaschii).